Reading from the N-terminus, the 910-residue chain is Myelin regulatory factor-like protein (910 aa).

The segment at residues 142-405 (GCSYPQQPLC…SNPGQFENDS (264 aa)) is a DNA-binding region (NDT80). Residues 189 to 208 (RSRSSEVQDPDSEGQNRMPT) form a disordered region. One can recognise a Peptidase S74 domain in the interval 451 to 559 (SDSRAKQNIQ…KLTNNLEERI (109 aa)). Positions 543–575 (GAVKQLCKLTNNLEERIEELEIWNRKLARLKRL) form a coiled coil. A helical transmembrane segment spans residues 628–648 (LVITLIAVMAFCALTIVALYI). The tract at residues 661-682 (LPPSNITSSQEPALLPTASSSA) is disordered. Polar residues predominate over residues 663–682 (PSNITSSQEPALLPTASSSA).

Belongs to the MRF family.

It localises to the membrane. The chain is Myelin regulatory factor-like protein (MYRFL) from Homo sapiens (Human).